The following is a 461-amino-acid chain: Phosphomethylpyrimidine synthase (461 aa).

Residues Asn-80, Met-109, Tyr-139, His-174, Ser-194–Gly-196, Asp-235–Arg-238, and Glu-274 contribute to the substrate site. Residue His-278 coordinates Zn(2+). Tyr-301 provides a ligand contact to substrate. His-342 provides a ligand contact to Zn(2+). 3 residues coordinate [4Fe-4S] cluster: Cys-422, Cys-425, and Cys-430.

It belongs to the ThiC family. Homodimer. The cofactor is [4Fe-4S] cluster.

It catalyses the reaction 5-amino-1-(5-phospho-beta-D-ribosyl)imidazole + S-adenosyl-L-methionine = 4-amino-2-methyl-5-(phosphooxymethyl)pyrimidine + CO + 5'-deoxyadenosine + formate + L-methionine + 3 H(+). Its pathway is cofactor biosynthesis; thiamine diphosphate biosynthesis. Catalyzes the synthesis of the hydroxymethylpyrimidine phosphate (HMP-P) moiety of thiamine from aminoimidazole ribotide (AIR) in a radical S-adenosyl-L-methionine (SAM)-dependent reaction. The protein is Phosphomethylpyrimidine synthase of Nautilia profundicola (strain ATCC BAA-1463 / DSM 18972 / AmH).